A 379-amino-acid chain; its full sequence is Guanine nucleotide-binding protein subunit alpha-12 (379 aa).

C11 is lipidated: S-palmitoyl cysteine. The G-alpha domain maps to 54–379; the sequence is RLVKILLLGA…QENLKDIMLQ (326 aa). The interval 57–70 is G1 motif; it reads KILLLGAGESGKST. Residues 65-70 and 200-203 contribute to the GTP site; these read ESGKST and LLAR. S69 contributes to the Mg(2+) binding site. The interval 198-206 is G2 motif; sequence DILLARKAT. T206 contacts Mg(2+). At T206 the chain carries Phosphothreonine. Positions 221-230 are G3 motif; it reads FKMVDVGGQR. Residues 290 to 297 form a G4 motif region; sequence ILFLNKMD. GTP contacts are provided by residues 294–297 and A351; that span reads NKMD. The G5 motif stretch occupies residues 349 to 354; the sequence is TTAIDT.

The protein belongs to the G-alpha family. G(12) subfamily. G proteins are composed of 3 units; alpha, beta and gamma. The alpha chain contains the guanine nucleotide binding site. Interacts with UBXD5. Interacts (in GTP-bound form) with PPP5C (via TPR repeats); activates PPP5C phosphatase activity and translocates PPP5C to the cell membrane. Interacts with RGS22. Interacts (via N-terminus) with NAPA; the interaction promotes CDH5 localization to plasma membrane. Interacts with CTNND1 (via N-terminus); the interaction regulates CDH1-mediated cell-cell adhesion. Interacts with PPP2R1A; the interaction promotes protein phosphatase 2A activation causing dephosphorylation of MAPT. Interacts (in GTP-bound form) with ARHGEF1. Interacts (in GTP-bound form) with ARHGEF11 (via RGS domain). Interacts (in GTP-bound form) with ARHGEF12 (via RGS domain).

The protein resides in the cell membrane. It localises to the lateral cell membrane. The protein localises to the cytoplasm. Guanine nucleotide-binding proteins (G proteins) are involved as modulators or transducers in various transmembrane signaling systems. Activates effector molecule RhoA by binding and activating RhoGEFs (ARHGEF12/LARG). GNA12-dependent Rho signaling subsequently regulates transcription factor AP-1 (activating protein-1). GNA12-dependent Rho signaling also regulates protein phosphatese 2A activation causing dephosphorylation of its target proteins. Promotes tumor cell invasion and metastasis by activating RhoA/ROCK signaling pathway and up-regulating pro-inflammatory cytokine production. Inhibits CDH1-mediated cell adhesion in process independent from Rho activation. Together with NAPA promotes CDH5 localization to plasma membrane. May play a role in the control of cell migration through the TOR signaling cascade. This is Guanine nucleotide-binding protein subunit alpha-12 (Gna12) from Rattus norvegicus (Rat).